The chain runs to 572 residues: Mitochondrial chaperone TCM62 (572 aa).

A mitochondrion-targeting transit peptide spans 1–16; that stretch reads MLRNCLRKLGNHQTKC. Over 17 to 471 the chain is Mitochondrial matrix; that stretch reads SVKTLHTPIY…KANEPNFMTK (455 aa). The chain crosses the membrane as a helical span at residues 472–488; sequence VGINAVLSAVILPSEVA. Residues 489-572 lie on the Mitochondrial intermembrane side of the membrane; it reads FKNAYGYNYY…VYKKPERHKA (84 aa).

This sequence belongs to the chaperonin (HSP60) family. As to quaternary structure, forms a high molecular mass protein complex of approximately 850 kDa.

Its subcellular location is the mitochondrion inner membrane. Chaperone. Required for the assembly of succinate dehydrogenase subunits. Ensures mitochondrial gene expression at elevated temperatures and prevents heat-aggregation of the ribosomal subunit VAR1. This chain is Mitochondrial chaperone TCM62 (TCM62), found in Saccharomyces cerevisiae (strain YJM789) (Baker's yeast).